The chain runs to 136 residues: Large ribosomal subunit protein uL16 (136 aa).

This sequence belongs to the universal ribosomal protein uL16 family. As to quaternary structure, part of the 50S ribosomal subunit.

Binds 23S rRNA and is also seen to make contacts with the A and possibly P site tRNAs. In Rickettsia felis (strain ATCC VR-1525 / URRWXCal2) (Rickettsia azadi), this protein is Large ribosomal subunit protein uL16.